The primary structure comprises 941 residues: MutS protein homolog 1 (941 aa).

Residue 747-754 (GPNMAGKS) coordinates ATP.

Belongs to the DNA mismatch repair MutS family.

It localises to the cytoplasm. The protein resides in the mitochondrion. In terms of biological role, involved in mitochondrial DNA repair. The polypeptide is MutS protein homolog 1 (msh1) (Schizosaccharomyces pombe (strain 972 / ATCC 24843) (Fission yeast)).